The sequence spans 37 residues: MKVAASVRKICEKCRLIRRRGRLLVICSNPKHKQRQG.

Belongs to the bacterial ribosomal protein bL36 family.

It localises to the plastid. It is found in the chloroplast. The sequence is that of Large ribosomal subunit protein bL36c (rpl36) from Pisum sativum (Garden pea).